Here is a 216-residue protein sequence, read N- to C-terminus: Uridine kinase (216 aa).

16-23 (GASASGKS) contacts ATP.

The protein belongs to the uridine kinase family.

Its subcellular location is the cytoplasm. The catalysed reaction is uridine + ATP = UMP + ADP + H(+). It catalyses the reaction cytidine + ATP = CMP + ADP + H(+). It functions in the pathway pyrimidine metabolism; CTP biosynthesis via salvage pathway; CTP from cytidine: step 1/3. The protein operates within pyrimidine metabolism; UMP biosynthesis via salvage pathway; UMP from uridine: step 1/1. This chain is Uridine kinase, found in Mannheimia succiniciproducens (strain KCTC 0769BP / MBEL55E).